The sequence spans 400 residues: Vitamin K-dependent protein Z (400 aa).

Residues 1 to 23 (MAGCVPLLQGLVLVLALHRVEPS) form the signal peptide. Positions 24 to 40 (VFLPASKANDVLVRWKR) are excised as a propeptide. The region spanning 41–86 (AGSYLLEELFEGNLEKECYEEICVYEEAREVFENEVVTDEFWRRYK) is the Gla domain. 4-carboxyglutamate occurs at positions 47, 48, 51, 55, 57, 60, 61, 66, 67, 70, 73, 75, and 80. A disulfide bridge links Cys-58 with Cys-63. 2 EGF-like domains span residues 87–123 (GGSPCISQPCLHNGSCQDSIWGYTCTCSPGYEGSNCE) and 125–166 (AKNE…KQCV). 7 disulfide bridges follow: Cys-91-Cys-102, Cys-96-Cys-111, Cys-113-Cys-122, Cys-129-Cys-141, Cys-137-Cys-150, Cys-152-Cys-165, and Cys-203-Cys-219. Ser-93 is a glycosylation site (O-linked (Glc...) serine). An N-linked (GlcNAc...) asparagine glycan is attached at Asn-99. The residue at position 104 (Asp-104) is a (3R)-3-hydroxyaspartate. A Peptidase S1 domain is found at 175-400 (VLTSEKRAPD…YSLWFKQIMN (226 aa)). N-linked (GlcNAc...) asparagine glycans are attached at residues Asn-225, Asn-233, Asn-306, and Asn-332. Cys-327 and Cys-341 are oxidised to a cystine.

It belongs to the peptidase S1 family. Interacts with SERPINA10. In terms of processing, the iron and 2-oxoglutarate dependent 3-hydroxylation of aspartate and asparagine is (R) stereospecific within EGF domains. In terms of tissue distribution, plasma.

It is found in the secreted. Functionally, appears to assist hemostasis by binding thrombin and promoting its association with phospholipid vesicles. Inhibits activity of the coagulation protease factor Xa in the presence of SERPINA10, calcium and phospholipids. In Homo sapiens (Human), this protein is Vitamin K-dependent protein Z (PROZ).